The primary structure comprises 346 residues: Biotin synthase (346 aa).

The 219-residue stretch at 38 to 256 (RQVQVSTLLS…IAVARIMMPT (219 aa)) folds into the Radical SAM core domain. [4Fe-4S] cluster contacts are provided by cysteine 53, cysteine 57, and cysteine 60. Residues cysteine 97, cysteine 128, cysteine 188, and arginine 260 each coordinate [2Fe-2S] cluster.

The protein belongs to the radical SAM superfamily. Biotin synthase family. Homodimer. It depends on [4Fe-4S] cluster as a cofactor. [2Fe-2S] cluster is required as a cofactor.

It carries out the reaction (4R,5S)-dethiobiotin + (sulfur carrier)-SH + 2 reduced [2Fe-2S]-[ferredoxin] + 2 S-adenosyl-L-methionine = (sulfur carrier)-H + biotin + 2 5'-deoxyadenosine + 2 L-methionine + 2 oxidized [2Fe-2S]-[ferredoxin]. The protein operates within cofactor biosynthesis; biotin biosynthesis; biotin from 7,8-diaminononanoate: step 2/2. Catalyzes the conversion of dethiobiotin (DTB) to biotin by the insertion of a sulfur atom into dethiobiotin via a radical-based mechanism. This chain is Biotin synthase, found in Shigella boydii serotype 18 (strain CDC 3083-94 / BS512).